The sequence spans 359 residues: Peptide chain release factor 1 (359 aa).

N5-methylglutamine is present on Q236.

It belongs to the prokaryotic/mitochondrial release factor family. Post-translationally, methylated by PrmC. Methylation increases the termination efficiency of RF1.

It is found in the cytoplasm. In terms of biological role, peptide chain release factor 1 directs the termination of translation in response to the peptide chain termination codons UAG and UAA. The chain is Peptide chain release factor 1 from Streptococcus agalactiae.